The sequence spans 706 residues: Termination factor NPH-I homolog (706 aa).

One can recognise a Helicase ATP-binding domain in the interval 62–227 (IGQGENTRGL…VPCFNMLSGR (166 aa)). 75–82 (HQMGMGKT) provides a ligand contact to ATP. A DEAH box motif is present at residues 168 to 171 (DEAH). In terms of domain architecture, Helicase C-terminal spans 417–599 (QCLQPLKVLE…HLNSAFRDLL (183 aa)).

This sequence belongs to the DEAD box helicase family. DEAH subfamily. Part of the viral DNA-directed RNA polymerase that consists of 8 polII-like subunits (RPB1, RPB2, RPB3, RPB5, RPB6, RPB7, RPB9, RPB10), a capping enzyme and a termination factor.

It is found in the virion. Its function is as follows. Putative DNA-dependent ATPase required for providing the needed energy to achieve the termination of early transcripts. The chain is Termination factor NPH-I homolog from African swine fever virus (isolate Warthog/Namibia/Wart80/1980) (ASFV).